The chain runs to 165 residues: Phosphopantetheine adenylyltransferase (165 aa).

Thr-9 serves as a coordination point for substrate. Residues Thr-9–Phe-10 and His-17 contribute to the ATP site. Lys-41, Leu-73, and Arg-87 together coordinate substrate. ATP-binding positions include Gly-88–Arg-90, Glu-98, and Tyr-123–Thr-129.

This sequence belongs to the bacterial CoaD family. As to quaternary structure, homohexamer. Mg(2+) serves as cofactor.

Its subcellular location is the cytoplasm. It catalyses the reaction (R)-4'-phosphopantetheine + ATP + H(+) = 3'-dephospho-CoA + diphosphate. Its pathway is cofactor biosynthesis; coenzyme A biosynthesis; CoA from (R)-pantothenate: step 4/5. Reversibly transfers an adenylyl group from ATP to 4'-phosphopantetheine, yielding dephospho-CoA (dPCoA) and pyrophosphate. The polypeptide is Phosphopantetheine adenylyltransferase (Burkholderia vietnamiensis (strain G4 / LMG 22486) (Burkholderia cepacia (strain R1808))).